Here is a 416-residue protein sequence, read N- to C-terminus: 3-oxoacyl-[acyl-carrier-protein] synthase 2 (416 aa).

Residues 6–414 (KKRVVVTGLG…GHNVTLAFKK (409 aa)) enclose the Ketosynthase family 3 (KS3) domain. Residues C167, H307, and H344 each act as for beta-ketoacyl synthase activity in the active site.

It belongs to the thiolase-like superfamily. Beta-ketoacyl-ACP synthases family. As to quaternary structure, homodimer.

It carries out the reaction a fatty acyl-[ACP] + malonyl-[ACP] + H(+) = a 3-oxoacyl-[ACP] + holo-[ACP] + CO2. The enzyme catalyses (9Z)-hexadecenoyl-[ACP] + malonyl-[ACP] + H(+) = 3-oxo-(11Z)-octadecenoyl-[ACP] + holo-[ACP] + CO2. Its pathway is lipid metabolism; fatty acid biosynthesis. Involved in the type II fatty acid elongation cycle. Catalyzes the elongation of a wide range of acyl-ACP by the addition of two carbons from malonyl-ACP to an acyl acceptor. Can efficiently catalyze the conversion of palmitoleoyl-ACP (cis-hexadec-9-enoyl-ACP) to cis-vaccenoyl-ACP (cis-octadec-11-enoyl-ACP), an essential step in the thermal regulation of fatty acid composition. This is 3-oxoacyl-[acyl-carrier-protein] synthase 2 (fabF) from Synechocystis sp. (strain ATCC 27184 / PCC 6803 / Kazusa).